Consider the following 429-residue polypeptide: Kynureninase (429 aa).

Residues Leu109, Thr110, 137–140 (FPSD), Asp222, His225, and Tyr247 contribute to the pyridoxal 5'-phosphate site. An N6-(pyridoxal phosphate)lysine modification is found at Lys248. 2 residues coordinate pyridoxal 5'-phosphate: Trp278 and Asn306.

This sequence belongs to the kynureninase family. Homodimer. Pyridoxal 5'-phosphate serves as cofactor.

It catalyses the reaction L-kynurenine + H2O = anthranilate + L-alanine + H(+). The catalysed reaction is 3-hydroxy-L-kynurenine + H2O = 3-hydroxyanthranilate + L-alanine + H(+). The protein operates within amino-acid degradation; L-kynurenine degradation; L-alanine and anthranilate from L-kynurenine: step 1/1. Its pathway is cofactor biosynthesis; NAD(+) biosynthesis; quinolinate from L-kynurenine: step 2/3. Catalyzes the cleavage of L-kynurenine (L-Kyn) and L-3-hydroxykynurenine (L-3OHKyn) into anthranilic acid (AA) and 3-hydroxyanthranilic acid (3-OHAA), respectively. This Salinispora tropica (strain ATCC BAA-916 / DSM 44818 / JCM 13857 / NBRC 105044 / CNB-440) protein is Kynureninase.